Consider the following 299-residue polypeptide: MTLYDVPAPAKLNLFLHVVGRRADGYHLLQTAFRFIDLADTLHFEARADGAIGRAYELPGVAESDDLVMRAARSLQRATGTRQGAQIGLHKRIPQGGGLGGGSSDAATTLIALNRLWGTGLSRSQLMQLALPLGADVPVFVFGQSAFAQGVGEDLTAVALSPAAYLVVQPDAGVPTAVIFSDPDLTRDCASVTIADFLALPTSCFGRNDLEPVVLRRYPEVSGAVRWLFEHGLRVRMSGSGACLFAEFPTLPEAVLAQEEITATMRVAGKTTSHTHPGFRLVQASTGLTEHPLRNWIAS.

The active site involves K11. An ATP-binding site is contributed by P94–S104. The active site involves D136.

This sequence belongs to the GHMP kinase family. IspE subfamily.

The catalysed reaction is 4-CDP-2-C-methyl-D-erythritol + ATP = 4-CDP-2-C-methyl-D-erythritol 2-phosphate + ADP + H(+). Its pathway is isoprenoid biosynthesis; isopentenyl diphosphate biosynthesis via DXP pathway; isopentenyl diphosphate from 1-deoxy-D-xylulose 5-phosphate: step 3/6. Catalyzes the phosphorylation of the position 2 hydroxy group of 4-diphosphocytidyl-2C-methyl-D-erythritol. In Bordetella pertussis (strain Tohama I / ATCC BAA-589 / NCTC 13251), this protein is 4-diphosphocytidyl-2-C-methyl-D-erythritol kinase.